The following is a 527-amino-acid chain: Protein disulfide-isomerase A2 (527 aa).

The N-terminal stretch at 1-20 (MDKQLLPVLLLLLGVSGSWG) is a signal peptide. Positions 20 to 41 (GQGEEPGGPSEVLPEEPTGEEV) are disordered. The Thioredoxin 1 domain maps to 29–155 (SEVLPEEPTG…IAEWLRRRVG (127 aa)). Active-site nucleophile residues include Cys74 and Cys77. Cysteines 74 and 77 form a disulfide. Residues Asn130 and Asn287 are each glycosylated (N-linked (GlcNAc...) asparagine). In terms of domain architecture, Thioredoxin 2 spans 355-499 (VIAITAASVA…FSKFLDSGGH (145 aa)). Residues Cys421 and Cys424 each act as nucleophile in the active site. Cys421 and Cys424 are oxidised to a cystine. A disordered region spans residues 495 to 527 (DSGGHLPKEEPKEPAASAPEAQANSTLGPKEEL). N-linked (GlcNAc...) asparagine glycosylation occurs at Asn518. The Prevents secretion from ER signature appears at 524–527 (KEEL).

It belongs to the protein disulfide isomerase family. In terms of assembly, part of a large chaperone multiprotein complex comprising DNAJB11, HSP90B1, HSPA5, HYOU, PDIA2, PDIA4, PDIA6, PPIB, SDF2L1, UGGT1 and very small amounts of ERP29, but not, or at very low levels, CALR nor CANX. Glycosylated. In terms of tissue distribution, highly expressed in pancreas.

It localises to the endoplasmic reticulum lumen. It catalyses the reaction Catalyzes the rearrangement of -S-S- bonds in proteins.. In terms of biological role, acts as an intracellular estrogen-binding protein. May be involved in modulating cellular levels and biological functions of estrogens in the pancreas. May act as a chaperone that inhibits aggregation of misfolded proteins. This chain is Protein disulfide-isomerase A2, found in Mus musculus (Mouse).